The sequence spans 307 residues: 2,4-diacetylphloroglucinol hydrolase (307 aa).

Residues His142, Glu173, His283, and Glu287 each coordinate Zn(2+).

Belongs to the DAPG/phloretin hydrolase family. It depends on Zn(2+) as a cofactor.

It carries out the reaction 2,4-diacetylphloroglucinol + H2O = 2-acetylphloroglucinol + acetate. With respect to regulation, activity is strongly reduced by pyoluteorin, an antifungal compound produced by the bacterium. Functionally, hydrolase that specifically degrades the potent antimicrobial compound 2,4-diacetylphloroglucinol (DAPG) to equimolar amounts of mildly toxic monoacetylphloroglucinol (MAPG) and acetate. Does not degrade other compounds with structures similar to DAPG, such as MAPG and triacetylphloroglucinol, suggesting strict substrate specificity. Degradation of DAPG to MAPG may provide an additional means of fine-tuning levels of this antibiotic or may help avoid accumulation of a metabolite that at high levels may become toxic to the producing bacterium. This chain is 2,4-diacetylphloroglucinol hydrolase, found in Pseudomonas protegens (strain DSM 19095 / LMG 27888 / CFBP 6595 / CHA0).